The sequence spans 342 residues: Anthranilate phosphoribosyltransferase (342 aa).

Residues glycine 84, 87–88 (GD), threonine 92, 94–97 (NIST), 112–120 (KHGGRSVSS), and serine 124 each bind 5-phospho-alpha-D-ribose 1-diphosphate. Position 84 (glycine 84) interacts with anthranilate. Position 96 (serine 96) interacts with Mg(2+). Arginine 170 provides a ligand contact to anthranilate. Positions 229 and 230 each coordinate Mg(2+).

Belongs to the anthranilate phosphoribosyltransferase family. In terms of assembly, homodimer. Requires Mg(2+) as cofactor.

It carries out the reaction N-(5-phospho-beta-D-ribosyl)anthranilate + diphosphate = 5-phospho-alpha-D-ribose 1-diphosphate + anthranilate. Its pathway is amino-acid biosynthesis; L-tryptophan biosynthesis; L-tryptophan from chorismate: step 2/5. Its function is as follows. Catalyzes the transfer of the phosphoribosyl group of 5-phosphorylribose-1-pyrophosphate (PRPP) to anthranilate to yield N-(5'-phosphoribosyl)-anthranilate (PRA). The sequence is that of Anthranilate phosphoribosyltransferase from Verminephrobacter eiseniae (strain EF01-2).